A 117-amino-acid chain; its full sequence is MDKKTARMRRARKSRGRIRDVGAYRLSVHRTPRHIYAQVQQPDGATTLAAASTVEPALRQRSEGTGNVSAAQEVGRLIAERAKAAGIEQVAFDRGGYQYHGRVQALAEAAREAGLKF.

This sequence belongs to the universal ribosomal protein uL18 family. As to quaternary structure, part of the 50S ribosomal subunit; part of the 5S rRNA/L5/L18/L25 subcomplex. Contacts the 5S and 23S rRNAs.

This is one of the proteins that bind and probably mediate the attachment of the 5S RNA into the large ribosomal subunit, where it forms part of the central protuberance. This Halorhodospira halophila (strain DSM 244 / SL1) (Ectothiorhodospira halophila (strain DSM 244 / SL1)) protein is Large ribosomal subunit protein uL18.